We begin with the raw amino-acid sequence, 220 residues long: Chalcone--flavanone isomerase B (220 aa).

Residues Thr-50, Asn-115, and Thr-192 each coordinate substrate.

Belongs to the chalcone isomerase family.

The catalysed reaction is a chalcone = a flavanone.. It functions in the pathway secondary metabolite biosynthesis; flavonoid biosynthesis. Its function is as follows. Catalyzes the intramolecular cyclization of bicyclic chalcones into tricyclic (S)-flavanones. Responsible for the isomerization of 4,2',4',6'-tetrahydroxychalcone (also termed chalcone) into naringenin. The sequence is that of Chalcone--flavanone isomerase B (CHI2) from Petunia hybrida (Petunia).